The primary structure comprises 41 residues: Large ribosomal subunit protein bL36 (41 aa).

The protein belongs to the bacterial ribosomal protein bL36 family.

The protein is Large ribosomal subunit protein bL36 of Vibrio vulnificus (strain YJ016).